The following is a 127-amino-acid chain: uncharacterized protein (127 aa).

This is an uncharacterized protein from Bacillus subtilis (strain 168).